The sequence spans 74 residues: UPF0435 protein Bcer98_0391 (74 aa).

Belongs to the UPF0435 family.

The chain is UPF0435 protein Bcer98_0391 from Bacillus cytotoxicus (strain DSM 22905 / CIP 110041 / 391-98 / NVH 391-98).